The sequence spans 183 residues: uncharacterized protein (183 aa).

An SIS domain is found at 27-170 (MIKLIDSARS…VAEIMMQKHL (144 aa)).

The protein belongs to the SIS family. PHI subfamily.

This is an uncharacterized protein from Archaeoglobus fulgidus (strain ATCC 49558 / DSM 4304 / JCM 9628 / NBRC 100126 / VC-16).